The primary structure comprises 399 residues: Tyrosine--tRNA ligase (399 aa).

A 'HIGH' region motif is present at residues proline 42–histidine 51. Residues lysine 226 to serine 230 carry the 'KMSKS' region motif. Lysine 229 contributes to the ATP binding site. One can recognise an S4 RNA-binding domain in the interval leucine 337 to valine 398.

It belongs to the class-I aminoacyl-tRNA synthetase family. TyrS type 2 subfamily. As to quaternary structure, homodimer.

Its subcellular location is the cytoplasm. It carries out the reaction tRNA(Tyr) + L-tyrosine + ATP = L-tyrosyl-tRNA(Tyr) + AMP + diphosphate + H(+). Its function is as follows. Catalyzes the attachment of tyrosine to tRNA(Tyr) in a two-step reaction: tyrosine is first activated by ATP to form Tyr-AMP and then transferred to the acceptor end of tRNA(Tyr). The polypeptide is Tyrosine--tRNA ligase (Coxiella burnetii (strain RSA 493 / Nine Mile phase I)).